A 383-amino-acid polypeptide reads, in one-letter code: ATP phosphoribosyltransferase regulatory subunit (383 aa).

This sequence belongs to the class-II aminoacyl-tRNA synthetase family. HisZ subfamily. In terms of assembly, heteromultimer composed of HisG and HisZ subunits.

The protein resides in the cytoplasm. It participates in amino-acid biosynthesis; L-histidine biosynthesis; L-histidine from 5-phospho-alpha-D-ribose 1-diphosphate: step 1/9. Its function is as follows. Required for the first step of histidine biosynthesis. May allow the feedback regulation of ATP phosphoribosyltransferase activity by histidine. The sequence is that of ATP phosphoribosyltransferase regulatory subunit from Desulfitobacterium hafniense (strain Y51).